Here is a 474-residue protein sequence, read N- to C-terminus: 3-isopropylmalate dehydratase large subunit (474 aa).

Positions 353, 414, and 417 each coordinate [4Fe-4S] cluster.

The protein belongs to the aconitase/IPM isomerase family. LeuC type 1 subfamily. As to quaternary structure, heterodimer of LeuC and LeuD. [4Fe-4S] cluster serves as cofactor.

It catalyses the reaction (2R,3S)-3-isopropylmalate = (2S)-2-isopropylmalate. It participates in amino-acid biosynthesis; L-leucine biosynthesis; L-leucine from 3-methyl-2-oxobutanoate: step 2/4. Its function is as follows. Catalyzes the isomerization between 2-isopropylmalate and 3-isopropylmalate, via the formation of 2-isopropylmaleate. This chain is 3-isopropylmalate dehydratase large subunit, found in Xylella fastidiosa (strain M23).